A 694-amino-acid chain; its full sequence is Beta-mannosyltransferase 8 (694 aa).

At 1-11 (MKFPKLRKRTV) the chain is on the cytoplasmic side. The chain crosses the membrane as a helical span at residues 12 to 29 (YWAVLTVFALFTIHFVFQ). Residues 30–694 (YKEHNSHRVQ…YLYDHASVNS (665 aa)) lie on the Extracellular side of the membrane. N-linked (GlcNAc...) asparagine glycans are attached at residues Asn101 and Asn542.

Belongs to the BMT family.

The protein resides in the membrane. Its function is as follows. Beta-mannosyltransferase involved in cell wall biosynthesis through beta-1,2-mannosylation of cell wall phosphopeptidomannan. Plays a role in the ability to produce hyphae in the presence of three bacterial species. This is Beta-mannosyltransferase 8 (BMT8) from Candida albicans (strain SC5314 / ATCC MYA-2876) (Yeast).